A 434-amino-acid chain; its full sequence is Methylenetetrahydrofolate--tRNA-(uracil-5-)-methyltransferase TrmFO (434 aa).

10-15 (GAGLAG) provides a ligand contact to FAD.

The protein belongs to the MnmG family. TrmFO subfamily. Requires FAD as cofactor.

The protein resides in the cytoplasm. It catalyses the reaction uridine(54) in tRNA + (6R)-5,10-methylene-5,6,7,8-tetrahydrofolate + NADH + H(+) = 5-methyluridine(54) in tRNA + (6S)-5,6,7,8-tetrahydrofolate + NAD(+). The catalysed reaction is uridine(54) in tRNA + (6R)-5,10-methylene-5,6,7,8-tetrahydrofolate + NADPH + H(+) = 5-methyluridine(54) in tRNA + (6S)-5,6,7,8-tetrahydrofolate + NADP(+). In terms of biological role, catalyzes the folate-dependent formation of 5-methyl-uridine at position 54 (M-5-U54) in all tRNAs. This Bacillus cereus (strain Q1) protein is Methylenetetrahydrofolate--tRNA-(uracil-5-)-methyltransferase TrmFO.